Reading from the N-terminus, the 255-residue chain is 5-oxoprolinase subunit A 1 (255 aa).

It belongs to the LamB/PxpA family. In terms of assembly, forms a complex composed of PxpA, PxpB and PxpC.

It catalyses the reaction 5-oxo-L-proline + ATP + 2 H2O = L-glutamate + ADP + phosphate + H(+). In terms of biological role, catalyzes the cleavage of 5-oxoproline to form L-glutamate coupled to the hydrolysis of ATP to ADP and inorganic phosphate. The chain is 5-oxoprolinase subunit A 1 from Agrobacterium fabrum (strain C58 / ATCC 33970) (Agrobacterium tumefaciens (strain C58)).